The following is a 440-amino-acid chain: Glutamyl-tRNA reductase (440 aa).

Substrate-binding positions include 47–50 (TCNR), Ser110, 115–117 (ERE), and Gln121. Cys48 serves as the catalytic Nucleophile. 192–197 (GTGAYA) is an NADP(+) binding site.

Belongs to the glutamyl-tRNA reductase family. As to quaternary structure, homodimer.

The enzyme catalyses (S)-4-amino-5-oxopentanoate + tRNA(Glu) + NADP(+) = L-glutamyl-tRNA(Glu) + NADPH + H(+). The protein operates within porphyrin-containing compound metabolism; protoporphyrin-IX biosynthesis; 5-aminolevulinate from L-glutamyl-tRNA(Glu): step 1/2. Catalyzes the NADPH-dependent reduction of glutamyl-tRNA(Glu) to glutamate 1-semialdehyde (GSA). The sequence is that of Glutamyl-tRNA reductase from Paenarthrobacter aurescens (strain TC1).